The primary structure comprises 469 residues: Phenylalanine--tRNA ligase alpha subunit (469 aa).

L-phenylalanine-binding positions include Thr-309, 348–350 (QLD), and Phe-388. A Mg(2+)-binding site is contributed by Glu-390.

This sequence belongs to the class-II aminoacyl-tRNA synthetase family. Phe-tRNA synthetase alpha subunit type 2 subfamily. In terms of assembly, tetramer of two alpha and two beta subunits. The cofactor is Mg(2+).

The protein localises to the cytoplasm. The enzyme catalyses tRNA(Phe) + L-phenylalanine + ATP = L-phenylalanyl-tRNA(Phe) + AMP + diphosphate + H(+). In Sulfurisphaera tokodaii (strain DSM 16993 / JCM 10545 / NBRC 100140 / 7) (Sulfolobus tokodaii), this protein is Phenylalanine--tRNA ligase alpha subunit.